The following is a 773-amino-acid chain: Glucan endo-1,3-beta-D-glucosidase (773 aa).

Residues 1 to 194 form a beta-sandwich subdomain region; it reads MPPGAKVPQA…KNYFSIAVLP (194 aa). The GH81 domain occupies 1–647; it reads MPPGAKVPQA…HWICNLDSLG (647 aa). Mg(2+) contacts are provided by I31, N34, Q35, Y36, and A89. Residues 195 to 288 form an alpha/beta subdomain region; the sequence is DNTVSTLTYY…QGTSFKTVYR (94 aa). The segment at 298-647 is (alpha/beta)6 barrel subdomain; the sequence is DKGTYDREAL…HWICNLDSLG (350 aa). (1,3-beta-D-glucosyl)n-binding residues include Y327 and K331. The Ca(2+) site is built by D365, T368, E373, and K376. (1,3-beta-D-glucosyl)n-binding residues include D402 and H406. D402 is an active-site residue. Residues L454, R455, and F457 each coordinate Ca(2+). Residues N477, E479, and E483 each coordinate (1,3-beta-D-glucosyl)n. Active-site residues include E479 and E483. Residues K527, K618, N619, and W621 each contribute to the Mg(2+) site. Ca(2+) contacts are provided by D712, N714, D716, G717, K718, D723, D748, I749, N750, D752, K754, and D759.

Belongs to the glycosyl hydrolase 81 family. Ca(2+) is required as a cofactor. It depends on Mg(2+) as a cofactor.

The protein resides in the secreted. It carries out the reaction Hydrolysis of (1-&gt;3)-beta-D-glucosidic linkages in (1-&gt;3)-beta-D-glucans.. Inhibited by manganese, zinc, and copper ions. In terms of biological role, cleaves internal linkages in 1,3-beta-glucan. May contribute to plant biomass degradation. The polypeptide is Glucan endo-1,3-beta-D-glucosidase (Acetivibrio thermocellus (strain ATCC 27405 / DSM 1237 / JCM 9322 / NBRC 103400 / NCIMB 10682 / NRRL B-4536 / VPI 7372) (Clostridium thermocellum)).